The following is a 356-amino-acid chain: Peritrophin-44 (356 aa).

The signal sequence occupies residues 1 to 23 (MKELQITTGCLLLMVAAIGKTSA). 5 consecutive Chitin-binding type-2 domains span residues 28-85 (SETC…KCIS), 88-146 (KNAC…ECTA), 147-201 (DSIC…PCLA), 220-283 (NFVC…PCTF), and 286-355 (CGNL…YKLC). Cysteine 62 and cysteine 75 form a disulfide bridge. Residue asparagine 114 is glycosylated (N-linked (GlcNAc...) asparagine). 3 disulfides stabilise this stretch: cysteine 122-cysteine 135, cysteine 181-cysteine 193, and cysteine 262-cysteine 273. Asparagine 309 is a glycosylation site (N-linked (GlcNAc...) asparagine).

Post-translationally, glycosylated. As to expression, larval peritrophic membrane.

May have roles in the maintenance of peritrophic membrane structure and in the determination of the porosity of the peritrophic membrane. May bind chitin or related oligosaccharide structures. This Lucilia cuprina (Green bottle fly) protein is Peritrophin-44.